The chain runs to 138 residues: Large ribosomal subunit protein bL19 (138 aa).

The protein belongs to the bacterial ribosomal protein bL19 family.

Functionally, this protein is located at the 30S-50S ribosomal subunit interface and may play a role in the structure and function of the aminoacyl-tRNA binding site. The protein is Large ribosomal subunit protein bL19 (rplS) of Rickettsia prowazekii (strain Madrid E).